We begin with the raw amino-acid sequence, 66 residues long: Large ribosomal subunit protein bL33c (66 aa).

Belongs to the bacterial ribosomal protein bL33 family.

The protein localises to the plastid. Its subcellular location is the chloroplast. The protein is Large ribosomal subunit protein bL33c of Saccharum officinarum (Sugarcane).